The primary structure comprises 201 residues: 3-isopropylmalate dehydratase small subunit (201 aa).

This sequence belongs to the LeuD family. LeuD type 1 subfamily. As to quaternary structure, heterodimer of LeuC and LeuD.

The enzyme catalyses (2R,3S)-3-isopropylmalate = (2S)-2-isopropylmalate. It participates in amino-acid biosynthesis; L-leucine biosynthesis; L-leucine from 3-methyl-2-oxobutanoate: step 2/4. Catalyzes the isomerization between 2-isopropylmalate and 3-isopropylmalate, via the formation of 2-isopropylmaleate. The protein is 3-isopropylmalate dehydratase small subunit of Nitrobacter hamburgensis (strain DSM 10229 / NCIMB 13809 / X14).